A 384-amino-acid chain; its full sequence is N-acetyldiaminopimelate deacetylase (384 aa).

Residue aspartate 74 is part of the active site. Glutamate 133 functions as the Proton acceptor in the catalytic mechanism.

It belongs to the peptidase M20A family. N-acetyldiaminopimelate deacetylase subfamily.

It catalyses the reaction N-acetyl-(2S,6S)-2,6-diaminopimelate + H2O = (2S,6S)-2,6-diaminopimelate + acetate. It participates in amino-acid biosynthesis; L-lysine biosynthesis via DAP pathway; LL-2,6-diaminopimelate from (S)-tetrahydrodipicolinate (acetylase route): step 3/3. Functionally, catalyzes the conversion of N-acetyl-diaminopimelate to diaminopimelate and acetate. This is N-acetyldiaminopimelate deacetylase from Leuconostoc mesenteroides subsp. mesenteroides (strain ATCC 8293 / DSM 20343 / BCRC 11652 / CCM 1803 / JCM 6124 / NCDO 523 / NBRC 100496 / NCIMB 8023 / NCTC 12954 / NRRL B-1118 / 37Y).